A 448-amino-acid polypeptide reads, in one-letter code: Phosphoglucosamine mutase (448 aa).

Serine 101 (phosphoserine intermediate) is an active-site residue. Residues serine 101, aspartate 242, aspartate 244, and aspartate 246 each coordinate Mg(2+). Serine 101 is subject to Phosphoserine.

Belongs to the phosphohexose mutase family. Mg(2+) is required as a cofactor. Post-translationally, activated by phosphorylation.

It catalyses the reaction alpha-D-glucosamine 1-phosphate = D-glucosamine 6-phosphate. Its function is as follows. Catalyzes the conversion of glucosamine-6-phosphate to glucosamine-1-phosphate. The chain is Phosphoglucosamine mutase from Nitrobacter winogradskyi (strain ATCC 25391 / DSM 10237 / CIP 104748 / NCIMB 11846 / Nb-255).